A 417-amino-acid polypeptide reads, in one-letter code: Gamma-glutamyl phosphate reductase (417 aa).

The protein belongs to the gamma-glutamyl phosphate reductase family.

The protein localises to the cytoplasm. The catalysed reaction is L-glutamate 5-semialdehyde + phosphate + NADP(+) = L-glutamyl 5-phosphate + NADPH + H(+). It functions in the pathway amino-acid biosynthesis; L-proline biosynthesis; L-glutamate 5-semialdehyde from L-glutamate: step 2/2. Functionally, catalyzes the NADPH-dependent reduction of L-glutamate 5-phosphate into L-glutamate 5-semialdehyde and phosphate. The product spontaneously undergoes cyclization to form 1-pyrroline-5-carboxylate. This is Gamma-glutamyl phosphate reductase from Polynucleobacter asymbioticus (strain DSM 18221 / CIP 109841 / QLW-P1DMWA-1) (Polynucleobacter necessarius subsp. asymbioticus).